We begin with the raw amino-acid sequence, 271 residues long: 60 kDa heat shock protein, mitochondrial (271 aa).

Ser30 and Ser33 each carry phosphoserine. Residue Asp50 to Thr54 participates in ATP binding. Lys83 is subject to N6-acetyllysine. N6-acetyllysine; alternate is present on residues Lys84, Lys97, and Lys112. Residues Lys84, Lys97, and Lys112 each carry the N6-succinyllysine; alternate modification. An N6-acetyllysine modification is found at Lys125. Lys126 carries the N6-acetyllysine; alternate modification. The residue at position 126 (Lys126) is an N6-succinyllysine; alternate. At Lys145 the chain carries N6-acetyllysine. Lys175 bears the N6-succinyllysine mark. Lys188 and Lys237 each carry N6-acetyllysine. Gly257 is a binding site for ATP. At Lys270 the chain carries N6-acetyllysine.

Belongs to the chaperonin (HSP60) family. In terms of assembly, homoheptamer arranged in a ring structure. The functional units of these chaperonins consist of heptameric rings of the large subunit Hsp60, which function as a back-to-back double ring. Interacts with 2 heptameric Hsp10 rings to form the symmetrical football complex. Interacts with HRAS. Interacts with ATAD3A. Interacts with ETFBKMT and EEF1AKMT3. Interacts with MFHAS1. In terms of tissue distribution, detected at higher levels in caput epididymal spermatazoa than in cauda epididymal spermatazoa (at protein level).

The protein resides in the mitochondrion matrix. It catalyses the reaction ATP + H2O + a folded polypeptide = ADP + phosphate + an unfolded polypeptide.. In terms of biological role, chaperonin implicated in mitochondrial protein import and macromolecular assembly. Together with Hsp10, facilitates the correct folding of imported proteins. May also prevent misfolding and promote the refolding and proper assembly of unfolded polypeptides generated under stress conditions in the mitochondrial matrix. The functional units of these chaperonins consist of heptameric rings of the large subunit Hsp60, which function as a back-to-back double ring. In a cyclic reaction, Hsp60 ring complexes bind one unfolded substrate protein per ring, followed by the binding of ATP and association with 2 heptameric rings of the co-chaperonin Hsp10. This leads to sequestration of the substrate protein in the inner cavity of Hsp60 where, for a certain period of time, it can fold undisturbed by other cell components. Synchronous hydrolysis of ATP in all Hsp60 subunits results in the dissociation of the chaperonin rings and the release of ADP and the folded substrate protein. In Mesocricetus auratus (Golden hamster), this protein is 60 kDa heat shock protein, mitochondrial.